The primary structure comprises 258 residues: Imidazole glycerol phosphate synthase subunit HisF (258 aa).

Active-site residues include Asp11 and Asp130.

Belongs to the HisA/HisF family. As to quaternary structure, heterodimer of HisH and HisF.

The protein resides in the cytoplasm. It catalyses the reaction 5-[(5-phospho-1-deoxy-D-ribulos-1-ylimino)methylamino]-1-(5-phospho-beta-D-ribosyl)imidazole-4-carboxamide + L-glutamine = D-erythro-1-(imidazol-4-yl)glycerol 3-phosphate + 5-amino-1-(5-phospho-beta-D-ribosyl)imidazole-4-carboxamide + L-glutamate + H(+). It functions in the pathway amino-acid biosynthesis; L-histidine biosynthesis; L-histidine from 5-phospho-alpha-D-ribose 1-diphosphate: step 5/9. Functionally, IGPS catalyzes the conversion of PRFAR and glutamine to IGP, AICAR and glutamate. The HisF subunit catalyzes the cyclization activity that produces IGP and AICAR from PRFAR using the ammonia provided by the HisH subunit. The sequence is that of Imidazole glycerol phosphate synthase subunit HisF from Buchnera aphidicola subsp. Baizongia pistaciae (strain Bp).